A 148-amino-acid polypeptide reads, in one-letter code: Large ribosomal subunit protein uL15 (148 aa).

The segment at 1-57 is disordered; the sequence is MRLNDVKPQKGSKKRRRRVGRGISAGQGASAGLGMRGQKSRSGSGTRPGFEGGQQPL. A compositionally biased stretch (basic residues) spans 10–20; it reads KGSKKRRRRVG. The segment covering 23–35 has biased composition (gly residues); it reads ISAGQGASAGLGM.

It belongs to the universal ribosomal protein uL15 family. As to quaternary structure, part of the 50S ribosomal subunit.

Functionally, binds to the 23S rRNA. In Trichormus variabilis (strain ATCC 29413 / PCC 7937) (Anabaena variabilis), this protein is Large ribosomal subunit protein uL15.